The primary structure comprises 127 residues: Large ribosomal subunit protein eL8 (127 aa).

It belongs to the eukaryotic ribosomal protein eL8 family. In terms of assembly, part of the 50S ribosomal subunit. Probably part of the RNase P complex.

It localises to the cytoplasm. Multifunctional RNA-binding protein that recognizes the K-turn motif in ribosomal RNA, the RNA component of RNase P, box H/ACA, box C/D and box C'/D' sRNAs. This Hyperthermus butylicus (strain DSM 5456 / JCM 9403 / PLM1-5) protein is Large ribosomal subunit protein eL8.